The following is a 149-amino-acid chain: MERTFLAIKPDGVQRGLVGEIIRRFETKGFTLVGLKFLKVSKELAEQHYGVHRERPFFGSLVEFITSSPVVAMVWEGDGVVASARKIIGATNPLTSEPGTIRGDFGINIGRNLIHGSDAPETAQQEIALWFKDEELVNWQPHITPWLHE.

6 residues coordinate ATP: lysine 9, phenylalanine 57, arginine 85, threonine 91, arginine 102, and asparagine 112. Histidine 115 serves as the catalytic Pros-phosphohistidine intermediate.

Belongs to the NDK family. As to quaternary structure, homotetramer. Mg(2+) serves as cofactor.

The protein localises to the cytoplasm. It catalyses the reaction a 2'-deoxyribonucleoside 5'-diphosphate + ATP = a 2'-deoxyribonucleoside 5'-triphosphate + ADP. The enzyme catalyses a ribonucleoside 5'-diphosphate + ATP = a ribonucleoside 5'-triphosphate + ADP. Its function is as follows. Major role in the synthesis of nucleoside triphosphates other than ATP. The ATP gamma phosphate is transferred to the NDP beta phosphate via a ping-pong mechanism, using a phosphorylated active-site intermediate. The polypeptide is Nucleoside diphosphate kinase (Nostoc punctiforme (strain ATCC 29133 / PCC 73102)).